Reading from the N-terminus, the 215-residue chain is 16S rRNA (adenine(1408)-N(1))-methyltransferase (215 aa).

Residues Gly-32, Asp-55, 87 to 88 (AE), 102 to 107 (LMPWGS), and 191 to 193 (TSW) each bind S-adenosyl-L-methionine.

This sequence belongs to the methyltransferase superfamily. Kanamycin-apramycin resistance family.

It carries out the reaction adenosine(1408) in 16S rRNA + S-adenosyl-L-methionine = N(1)-methyladenosine(1408) in 16S rRNA + S-adenosyl-L-homocysteine + H(+). In terms of biological role, specifically methylates the N(1) position of adenine 1408 in 16S rRNA. Confers resistance to various aminoglycosides, including kanamycin, neomycin and apramycin. The protein is 16S rRNA (adenine(1408)-N(1))-methyltransferase (kamB) of Streptoalloteichus tenebrarius (strain ATCC 17920 / DSM 40477 / JCM 4838 / CBS 697.72 / NBRC 16177 / NCIMB 11028 / NRRL B-12390 / A12253. 1 / ISP 5477) (Streptomyces tenebrarius).